The chain runs to 247 residues: Granzyme B (247 aa).

The signal sequence occupies residues 1 to 18 (MQPILLLLAFLLLPRADA). Positions 19-20 (GE) are cleaved as a propeptide — activation peptide. A Peptidase S1 domain is found at 21-245 (IIGGHEAKPH…FVHWIKKTMK (225 aa)). Residues cysteine 49 and cysteine 65 are joined by a disulfide bond. Histidine 64 functions as the Charge relay system in the catalytic mechanism. Asparagine 71 and asparagine 104 each carry an N-linked (GlcNAc...) asparagine glycan. The active-site Charge relay system is the aspartate 108. Intrachain disulfides connect cysteine 142/cysteine 209 and cysteine 173/cysteine 188. Serine 203 (charge relay system) is an active-site residue.

Belongs to the peptidase S1 family. Granzyme subfamily.

It localises to the secreted. It is found in the cytolytic granule. The enzyme catalyses Preferential cleavage: -Asp-|-Xaa- &gt;&gt; -Asn-|-Xaa- &gt; -Met-|-Xaa-, -Ser-|-Xaa-.. With respect to regulation, inactivated by the serine protease inhibitor diisopropylfluorophosphate. In terms of biological role, abundant protease in the cytosolic granules of cytotoxic T-cells and NK-cells which activates caspase-independent pyroptosis when delivered into the target cell through the immunological synapse. It cleaves after Asp. Once delivered into the target cell, acts by catalyzing cleavage of gasdermin-E (GSDME), releasing the pore-forming moiety of GSDME, thereby triggering pyroptosis and target cell death. Seems to be linked to an activation cascade of caspases (aspartate-specific cysteine proteases) responsible for apoptosis execution. Cleaves caspase-3, -9 and -10 (CASP3, CASP9 and CASP10, respectively) to give rise to active enzymes mediating apoptosis. Cleaves and activates CASP7 in response to bacterial infection, promoting plasma membrane repair. This chain is Granzyme B, found in Homo sapiens (Human).